The primary structure comprises 167 residues: Plastocyanin major isoform, chloroplastic (167 aa).

A chloroplast-targeting transit peptide spans 1–52 (MASVTSATVAIPSFTGLKASTIKSSATVRIQTAAVASPKLTVKSSLKNFGVA). Residues 53-68 (AVAAAASIALAGNAMA) constitute a thylakoid transit peptide. Residues 69–167 (IEVLLGGGDG…AGMVGKVTVN (99 aa)) form the Plastocyanin-like domain. Cu cation is bound by residues His-105, Cys-152, His-155, and Met-160.

Belongs to the plastocyanin family. The cofactor is Cu(2+).

It localises to the plastid. It is found in the chloroplast thylakoid membrane. In terms of biological role, participates in electron transfer between P700 and the cytochrome b6-f complex in photosystem I. Seems to be the major plastocyanin in Arabidopsis. The chain is Plastocyanin major isoform, chloroplastic (DRT112) from Arabidopsis thaliana (Mouse-ear cress).